The following is a 1013-amino-acid chain: PHD finger protein 20-like protein 1 (1013 aa).

The Tudor 1 domain occupies 11–71; sequence ITFEIGARLE…SNRLRPLERP (61 aa). Glycyl lysine isopeptide (Lys-Gly) (interchain with G-Cter in SUMO2) cross-links involve residues K75 and K79. Residues 85–141 enclose the Tudor 2 domain; sequence FDFKAGEEVLARWTDCRYYPAKIEAINKEGTFTVQFYDGVIRCLKRMHIKAMPEDAK. Disordered regions lie at residues 183–206, 309–368, 389–454, and 482–511; these read AKNK…RDGG, EQAI…TPKS, VINK…QSSV, and VTGS…FANP. The span at 315 to 346 shows a compositional bias: polar residues; sequence KPQSQKKNEAVISSSANTQKPALLSSTLSSGK. S368 carries the phosphoserine modification. Residues 404 to 415 are compositionally biased toward basic residues; it reads PCKHSERRRRSQ. The residue at position 432 (S432) is a Phosphoserine. Over residues 443–453 the composition is skewed to low complexity; the sequence is SISSQNQQQSS. Residues 496–505 are compositionally biased toward basic and acidic residues; it reads ECPREEKEET. Residue K530 forms a Glycyl lysine isopeptide (Lys-Gly) (interchain with G-Cter in SUMO2) linkage. Over residues 533–565 the composition is skewed to basic and acidic residues; that stretch reads KKVKLEEKTSTAFGKRKEKDKEKKEKRDKDHYK. A disordered region spans residues 533–585; it reads KKVKLEEKTSTAFGKRKEKDKEKKEKRDKDHYKPKQKKKKKKKKKSKQHDYSD. Basic residues predominate over residues 566 to 579; it reads PKQKKKKKKKKKSK. A PHD-type zinc finger spans residues 681 to 729; it reads IVRCICELDEENGFMIQCEECLCWQHSVCMGLLEDSIPEQYICYICRDP. Positions 824 to 852 are enriched in basic and acidic residues; sequence RKITPQDRANSEGKECVQNHKEPALRMEE. The tract at residues 824–911 is disordered; sequence RKITPQDRAN…LLYKNRGVSE (88 aa). Residues 854–878 show a composition bias toward polar residues; it reads YITSEHSYQKPQSFSQDCQSLTDPG. Over residues 879-892 the composition is skewed to acidic residues; it reads SSDDDDASSFEEDG. N6-acetyllysine is present on K905.

As to quaternary structure, interacts with methylated DNMT1 (DNMT1K142me1). Interacts with SOX2.

It is found in the nucleus. Is a negative regulator of proteasomal degradation of a set of methylated proteins, including DNMT1 and SOX2. Involved in the maintainance of embryonic stem cells pluripotency, through the regulation of SOX2 levels. The sequence is that of PHD finger protein 20-like protein 1 (Phf20l1) from Mus musculus (Mouse).